Consider the following 139-residue polypeptide: MKSRTILAFDFGTKSIGVAIGQEITGTARPLTSFKAQEGIPDWQKVEKLLSEWQPDLVVVGLPLNMDGTEQPLTARARKFANRLHGRFGVAIALHDERLSTVEARADLFERGGFKALDKGSVDAASAVIILESWFEAQH.

The protein belongs to the YqgF nuclease family.

Its subcellular location is the cytoplasm. Could be a nuclease involved in processing of the 5'-end of pre-16S rRNA. In Pectobacterium carotovorum subsp. carotovorum (strain PC1), this protein is Putative pre-16S rRNA nuclease.